A 246-amino-acid chain; its full sequence is Mitochondrial inner membrane protease ATP23 homolog (246 aa).

His125 lines the a divalent metal cation pocket. Glu126 is an active-site residue. His129 is an a divalent metal cation binding site.

This sequence belongs to the peptidase M76 family. Interacts with XRCC6.

This is Mitochondrial inner membrane protease ATP23 homolog from Homo sapiens (Human).